Consider the following 315-residue polypeptide: Ester hydrolase C11orf54 (315 aa).

Residues His266, His268, and His278 each coordinate Zn(2+).

Monomer. The cofactor is Zn(2+).

It is found in the nucleus. Its subcellular location is the cytoplasm. Exhibits ester hydrolase activity on the substrate p-nitrophenyl acetate, in vitro. Regulates DNA damage and repair by regulating HIF1A degradation via chaperone-mediated autophagy (CMA). Functionally, probably non-functional. This is Ester hydrolase C11orf54 (C11orf54) from Homo sapiens (Human).